The primary structure comprises 562 residues: NAD-dependent malic enzyme (562 aa).

Tyrosine 101 functions as the Proton donor in the catalytic mechanism. Residue arginine 154 coordinates NAD(+). Lysine 172 acts as the Proton acceptor in catalysis. Positions 243, 244, and 267 each coordinate a divalent metal cation. NAD(+) contacts are provided by aspartate 267 and asparagine 415.

Belongs to the malic enzymes family. Homotetramer. Mg(2+) serves as cofactor. Mn(2+) is required as a cofactor.

It catalyses the reaction (S)-malate + NAD(+) = pyruvate + CO2 + NADH. It carries out the reaction oxaloacetate + H(+) = pyruvate + CO2. This Shewanella baltica (strain OS223) protein is NAD-dependent malic enzyme.